The primary structure comprises 680 residues: DNA-directed RNA polymerase subunit beta' (680 aa).

Positions 69, 71, 87, and 90 each coordinate Zn(2+). The Mg(2+) site is built by Asp489, Asp491, and Asp493.

The protein belongs to the RNA polymerase beta' chain family. RpoC1 subfamily. In plastids the minimal PEP RNA polymerase catalytic core is composed of four subunits: alpha, beta, beta', and beta''. When a (nuclear-encoded) sigma factor is associated with the core the holoenzyme is formed, which can initiate transcription. Mg(2+) is required as a cofactor. The cofactor is Zn(2+).

Its subcellular location is the plastid. It localises to the chloroplast. It carries out the reaction RNA(n) + a ribonucleoside 5'-triphosphate = RNA(n+1) + diphosphate. Functionally, DNA-dependent RNA polymerase catalyzes the transcription of DNA into RNA using the four ribonucleoside triphosphates as substrates. In Olimarabidopsis pumila (Dwarf rocket), this protein is DNA-directed RNA polymerase subunit beta'.